We begin with the raw amino-acid sequence, 223 residues long: Matrix protein (223 aa).

A compositionally biased stretch (basic residues) spans Met-1–Pro-10. Positions Met-1–Arg-23 are disordered. Residues Ser-14–Arg-23 show a composition bias toward basic and acidic residues.

In terms of assembly, homomultimer. Interacts with nucleoprotein and with the cytoplasmic domain of glycoprotein.

The protein localises to the virion membrane. The protein resides in the host endomembrane system. Plays a major role in assembly and budding of virion. Completely covers the ribonucleoprotein coil and keep it in condensed bullet-shaped form. Inhibits viral transcription and stimulates replication. The protein is Matrix protein (M) of Bos taurus (Bovine).